Consider the following 215-residue polypeptide: Transmembrane protein 267 (215 aa).

3 consecutive transmembrane segments (helical) span residues 77–97 (FCEV…HFFL), 114–134 (PLHC…LMQL), and 178–198 (YWLY…IMCL).

The protein resides in the membrane. The polypeptide is Transmembrane protein 267 (tmem267) (Xenopus laevis (African clawed frog)).